Reading from the N-terminus, the 267-residue chain is Tryptophan synthase alpha chain (267 aa).

Catalysis depends on proton acceptor residues Glu-49 and Asp-60.

This sequence belongs to the TrpA family. Tetramer of two alpha and two beta chains.

It catalyses the reaction (1S,2R)-1-C-(indol-3-yl)glycerol 3-phosphate + L-serine = D-glyceraldehyde 3-phosphate + L-tryptophan + H2O. It functions in the pathway amino-acid biosynthesis; L-tryptophan biosynthesis; L-tryptophan from chorismate: step 5/5. In terms of biological role, the alpha subunit is responsible for the aldol cleavage of indoleglycerol phosphate to indole and glyceraldehyde 3-phosphate. The chain is Tryptophan synthase alpha chain from Salinispora arenicola (strain CNS-205).